The following is a 506-amino-acid chain: Maturase K (506 aa).

The protein belongs to the intron maturase 2 family. MatK subfamily.

It localises to the plastid. The protein localises to the chloroplast. Its function is as follows. Usually encoded in the trnK tRNA gene intron. Probably assists in splicing its own and other chloroplast group II introns. The polypeptide is Maturase K (Trifolium striatum (Knotted clover)).